Reading from the N-terminus, the 368-residue chain is 1-deoxy-D-xylulose 5-phosphate reductoisomerase (368 aa).

The NADPH site is built by Thr10, Gly11, Ser12, Ile13, Gln38, and Asn100. Lys101 serves as a coordination point for 1-deoxy-D-xylulose 5-phosphate. Glu102 is a binding site for NADPH. Asp125 contributes to the Mn(2+) binding site. Residues Ser126, Glu127, Ser151, and His172 each contribute to the 1-deoxy-D-xylulose 5-phosphate site. Position 127 (Glu127) interacts with Mn(2+). Gly178 contributes to the NADPH binding site. 4 residues coordinate 1-deoxy-D-xylulose 5-phosphate: Ser185, Asn190, Lys191, and Glu194. Glu194 serves as a coordination point for Mn(2+).

This sequence belongs to the DXR family. Mg(2+) is required as a cofactor. It depends on Mn(2+) as a cofactor.

The catalysed reaction is 2-C-methyl-D-erythritol 4-phosphate + NADP(+) = 1-deoxy-D-xylulose 5-phosphate + NADPH + H(+). The protein operates within isoprenoid biosynthesis; isopentenyl diphosphate biosynthesis via DXP pathway; isopentenyl diphosphate from 1-deoxy-D-xylulose 5-phosphate: step 1/6. Catalyzes the NADPH-dependent rearrangement and reduction of 1-deoxy-D-xylulose-5-phosphate (DXP) to 2-C-methyl-D-erythritol 4-phosphate (MEP). The sequence is that of 1-deoxy-D-xylulose 5-phosphate reductoisomerase from Tropheryma whipplei (strain Twist) (Whipple's bacillus).